Consider the following 225-residue polypeptide: NAD(P)H-quinone oxidoreductase subunit K, chloroplastic (225 aa).

[4Fe-4S] cluster is bound by residues Cys-43, Cys-44, Cys-108, and Cys-139.

The protein belongs to the complex I 20 kDa subunit family. In terms of assembly, NDH is composed of at least 16 different subunits, 5 of which are encoded in the nucleus. [4Fe-4S] cluster serves as cofactor.

The protein localises to the plastid. Its subcellular location is the chloroplast thylakoid membrane. The enzyme catalyses a plastoquinone + NADH + (n+1) H(+)(in) = a plastoquinol + NAD(+) + n H(+)(out). It carries out the reaction a plastoquinone + NADPH + (n+1) H(+)(in) = a plastoquinol + NADP(+) + n H(+)(out). Its function is as follows. NDH shuttles electrons from NAD(P)H:plastoquinone, via FMN and iron-sulfur (Fe-S) centers, to quinones in the photosynthetic chain and possibly in a chloroplast respiratory chain. The immediate electron acceptor for the enzyme in this species is believed to be plastoquinone. Couples the redox reaction to proton translocation, and thus conserves the redox energy in a proton gradient. The protein is NAD(P)H-quinone oxidoreductase subunit K, chloroplastic of Atropa belladonna (Belladonna).